The sequence spans 209 residues: Ribose 1,5-bisphosphate phosphokinase PhnN (209 aa).

Residue 27-34 coordinates ATP; it reads GPSGGGKD.

Belongs to the ribose 1,5-bisphosphokinase family.

It carries out the reaction alpha-D-ribose 1,5-bisphosphate + ATP = 5-phospho-alpha-D-ribose 1-diphosphate + ADP. It participates in metabolic intermediate biosynthesis; 5-phospho-alpha-D-ribose 1-diphosphate biosynthesis; 5-phospho-alpha-D-ribose 1-diphosphate from D-ribose 5-phosphate (route II): step 3/3. Functionally, catalyzes the phosphorylation of ribose 1,5-bisphosphate to 5-phospho-D-ribosyl alpha-1-diphosphate (PRPP). This chain is Ribose 1,5-bisphosphate phosphokinase PhnN, found in Chelativorans sp. (strain BNC1).